The following is a 152-amino-acid chain: MIALIQRVTRADVRVGGRTTGEIGAGLLALVCAERGDTEAAADKLLAKLLGYRVFSDAAGKMNLPVSNIDGEGRAGGLLLVSQFTLAADTNSGLRPSFTPAAPPDEGARLFDYFVAAARARHPVVETGEFGADMQVSLVNDGPVTFWLQVRP.

Positions Gly142–Pro143 match the Gly-cisPro motif, important for rejection of L-amino acids motif.

The protein belongs to the DTD family. As to quaternary structure, homodimer.

The protein resides in the cytoplasm. The enzyme catalyses glycyl-tRNA(Ala) + H2O = tRNA(Ala) + glycine + H(+). The catalysed reaction is a D-aminoacyl-tRNA + H2O = a tRNA + a D-alpha-amino acid + H(+). In terms of biological role, an aminoacyl-tRNA editing enzyme that deacylates mischarged D-aminoacyl-tRNAs. Also deacylates mischarged glycyl-tRNA(Ala), protecting cells against glycine mischarging by AlaRS. Acts via tRNA-based rather than protein-based catalysis; rejects L-amino acids rather than detecting D-amino acids in the active site. By recycling D-aminoacyl-tRNA to D-amino acids and free tRNA molecules, this enzyme counteracts the toxicity associated with the formation of D-aminoacyl-tRNA entities in vivo and helps enforce protein L-homochirality. The sequence is that of D-aminoacyl-tRNA deacylase from Burkholderia cenocepacia (strain ATCC BAA-245 / DSM 16553 / LMG 16656 / NCTC 13227 / J2315 / CF5610) (Burkholderia cepacia (strain J2315)).